Consider the following 164-residue polypeptide: MKMFVPAVVFAALASASAWANNGDTAQPLEKIAPYPQAEKGMKRQVITLTPQQDESTLKVELLIGQTLNVDCNQHRLGGTLETKTLEGWGYDYYVFDNVTSPVSTMMACPEGKKEQKFVTAWLGEDGMLRYNSKLPIVVYTPANVDVKYRIWKADANVQNAVAR.

Positions 1 to 20 (MKMFVPAVVFAALASASAWA) are cleaved as a signal peptide. The cysteines at positions 72 and 109 are disulfide-linked.

Belongs to the protease inhibitor I11 (ecotin) family. Homodimer.

The protein localises to the periplasm. Its function is as follows. General inhibitor of pancreatic serine proteases: inhibits chymotrypsin, trypsin, elastases, factor X, kallikrein as well as a variety of other proteases. This Salmonella enteritidis PT4 (strain P125109) protein is Ecotin.